Consider the following 82-residue polypeptide: Turripeptide Gsp9.1 (82 aa).

The first 23 residues, 1–23, serve as a signal peptide directing secretion; sequence MMAKLMITVMMVLLLSLQQGADG. A propeptide spanning residues 24-46 is cleaved from the precursor; the sequence is RSKRWRKNQMAASSIMRNLITAR. 2 positions are modified to 4-hydroxyproline: Pro49 and Pro50. 3 disulfide bridges follow: Cys53-Cys68, Cys58-Cys72, and Cys64-Cys79. Glu60 and Glu63 each carry 4-carboxyglutamate.

Belongs to the Pg turripeptide superfamily. As to expression, expressed by the venom duct.

The protein resides in the secreted. The protein is Turripeptide Gsp9.1 of Gemmula speciosa (Splendid gem-turris).